The chain runs to 712 residues: MAYYPHLPYHHHHHTSVPGERLSDPLDPLSADELKLAVEIIRHEYPSKHFAFNVVTLEEPPKAKYLHWKYSKEDAHKPERIALAVLLEKGVPGILEARVNLTKAEVIQIEHITGVCPILTADMLVNTEQIVRKDPAVIEQCILSGVPPDQMDHVYCDPWTIGYDERYGNTRRMQQAMMYYRSNEDDSQYSHPLDFCPIIDTEDQKVVAIDIPPVRRPLSKHKHSNFNKKDIEAELGKMREVKPISVTQPEGVNFRMKGRYIEWQNFRMHIGFNYREGIVLSDISYNDNGHIRPLFYRMSIAEMVVPYGNPEHPHQRKHAFDLGEYGAGYLTNPLALGCDCKGVIHYLDAHFVNNTGEVETVKNAICIHEEDDGVLFKHSDFRDKFRTTISARGIRLVISQIFTAANYEYMVYWIFHMDGVIECELKLTGILNTYAMNEGEDLKGWGTQVYPQVNAHNHQHLFCLRLNPMLDGYSNSVAVVDGVSGPGEPGSKENYYGNAFTTERTVPKTVKEAICDYNSDTSRTWDICNPNKLHPYSGKPVSYKLVSRETPRLMARPGSLVSNRAGFARHHIHVTPYKDGQIYPAGDYVPQTSGEPTKGLPEWIAEEPDASVDNTDIVVWHTFGITHFPAPEDFPLMPAEPIRLLLRPRNFFLRNPALDVPPSKNVTTSEVKQAHHHGNLHMMDMMKSLTDATSEFAFGEKFCEKHKGDHFF.

319 to 330 (AFDLGEYGAGYL) contributes to the substrate binding site. The active-site Proton acceptor is aspartate 321. The cysteines at positions 340 and 366 are disulfide-linked. Position 404 to 409 (404 to 409 (AANYEY)) interacts with substrate. The active-site Schiff-base intermediate with substrate; via topaquinone is tyrosine 407. Tyrosine 407 carries the 2',4',5'-topaquinone modification. Cu cation is bound by residues histidine 458 and histidine 460. Mn(2+)-binding residues include aspartate 616 and isoleucine 617. Histidine 627 serves as a coordination point for Cu cation.

It belongs to the copper/topaquinone oxidase family. In terms of assembly, homodimer. It depends on Cu cation as a cofactor. Zn(2+) serves as cofactor. The cofactor is L-topaquinone. Requires Mn(2+) as cofactor. In terms of processing, topaquinone (TPQ) is generated by copper-dependent autoxidation of a specific tyrosyl residue.

It localises to the cytoplasm. The enzyme catalyses a primary methyl amine + O2 + H2O = an aldehyde + H2O2 + NH4(+). Its function is as follows. Copper amine oxidase involved in the metabolism of xenobiotic and biogenic amines. Capable of catalyzing the oxidative deamination of primary amines such as ethylamine as alternate sources of nitrogen to support growth. The sequence is that of Copper amine oxidase 1 (cao1) from Schizosaccharomyces pombe (strain 972 / ATCC 24843) (Fission yeast).